The chain runs to 452 residues: NADH-cytochrome b5 reductase-like protein alnC (452 aa).

Residues 4 to 80 (PASITLAEVA…LKTLLVGSLQ (77 aa)) enclose the Cytochrome b5 heme-binding domain. FMN is bound at residue 33-38 (AEYRED). The heme site is built by His39 and His63. Residues 80–83 (QSKT) and 116–125 (NDTSKYGQLP) each bind FMN. A run of 2 helical transmembrane segments spans residues 120–140 (KYGQ…FFTL) and 166–186 (VGFL…ATFV). The FAD-binding FR-type domain maps to 225–324 (NTQQFLTLVD…RGPFGRYSPS (100 aa)). Residue 302–305 (YLLN) coordinates FAD. Residues 389 to 390 (GQ) and 395 to 399 (WKGLR) contribute to the NADP(+) site.

This sequence belongs to the flavoprotein pyridine nucleotide cytochrome reductase family. It depends on FAD as a cofactor. FMN serves as cofactor.

It is found in the membrane. Its pathway is polyketide biosynthesis. Its function is as follows. NADH-cytochrome b5 reductase-like protein; part of the gene cluster that mediates the biosynthesis of asperlin, a polyketide showing anti-inflammatory, antitumor and antibiotic activities. The first step of the asperlin biosynthesis is the production of the intermediate 2,4,6-octatrienoic acid by the highly redusing polyketide synthase alnA with cleavage of the PKS product by the esterase alnB. 2,4,6-octatrienoic acid is further converted to asperlin via several steps involving the remaining enzymes from the cluster. The polypeptide is NADH-cytochrome b5 reductase-like protein alnC (Emericella nidulans (strain FGSC A4 / ATCC 38163 / CBS 112.46 / NRRL 194 / M139) (Aspergillus nidulans)).